Here is a 563-residue protein sequence, read N- to C-terminus: 4-hydroxy-7-methoxy-3-oxo-3,4-dihydro-2H-1,4-benzoxazin-2-yl glucoside beta-D-glucosidase 2, chloroplastic (563 aa).

Residues 1 to 51 (MAPLLAAAMNHAAHPVLRSHLGPNNESFSRHHLSSSPQSSKRRFNLSFTPR) constitute a chloroplast transit peptide. The tract at residues 17–43 (LRSHLGPNNESFSRHHLSSSPQSSKRR) is disordered. Residues Q89, H193, and 241 to 242 (NE) contribute to the a beta-D-glucoside site. The Proton donor role is filled by E242. C261 and C267 are oxidised to a cystine. Positions 322–358 (SFLDEQAKERSMDINLGWFLEPVVRGDYPFSMRSLAR) are dimerization. Y384 is a binding site for a beta-D-glucoside. Dimerization regions lie at residues 391 to 402 (HIDISPKYSPVL) and 447 to 450 (KYGN). Residues E457, W508, 515–516 (EW), and Y524 contribute to the a beta-D-glucoside site. The active-site Nucleophile is the E457.

The protein belongs to the glycosyl hydrolase 1 family. Homo- and heterodimer. Expressed in leaves only starting at day 6 after germination.

The protein resides in the plastid. It localises to the chloroplast. The enzyme catalyses Hydrolysis of terminal, non-reducing beta-D-glucosyl residues with release of beta-D-glucose.. It catalyses the reaction DIMBOA beta-D-glucoside + H2O = DIMBOA + D-glucose. It carries out the reaction DIBOA beta-D-glucoside + H2O = DIBOA + D-glucose. Functionally, beta-glucosidase acting poorly on artificial aryl beta-glucosides. Has no activity toward the chromogenic substrate 6-bromo-2-naphthyl-beta-D-glucoside (6BNGlc). The polypeptide is 4-hydroxy-7-methoxy-3-oxo-3,4-dihydro-2H-1,4-benzoxazin-2-yl glucoside beta-D-glucosidase 2, chloroplastic (GLU2) (Zea mays (Maize)).